The primary structure comprises 367 residues: Alanine racemase (367 aa).

The active-site Proton acceptor; specific for D-alanine is lysine 40. The residue at position 40 (lysine 40) is an N6-(pyridoxal phosphate)lysine. Residue arginine 136 participates in substrate binding. The active-site Proton acceptor; specific for L-alanine is tyrosine 263. Methionine 310 provides a ligand contact to substrate.

It belongs to the alanine racemase family. The cofactor is pyridoxal 5'-phosphate.

It catalyses the reaction L-alanine = D-alanine. The protein operates within amino-acid biosynthesis; D-alanine biosynthesis; D-alanine from L-alanine: step 1/1. Catalyzes the interconversion of L-alanine and D-alanine. May also act on other amino acids. In Streptococcus pneumoniae (strain Hungary19A-6), this protein is Alanine racemase (alr).